The following is a 313-amino-acid chain: 4-diphosphocytidyl-2-C-methyl-D-erythritol kinase (313 aa).

Lys10 is a catalytic residue. 95–105 (PVTAGLGGGSS) lines the ATP pocket. Asp136 is an active-site residue. A disordered region spans residues 289-313 (HPRVSPWRSPRSASSRSTRRSSRPT). A compositionally biased stretch (low complexity) spans 292-304 (VSPWRSPRSASSR).

This sequence belongs to the GHMP kinase family. IspE subfamily.

It catalyses the reaction 4-CDP-2-C-methyl-D-erythritol + ATP = 4-CDP-2-C-methyl-D-erythritol 2-phosphate + ADP + H(+). The protein operates within isoprenoid biosynthesis; isopentenyl diphosphate biosynthesis via DXP pathway; isopentenyl diphosphate from 1-deoxy-D-xylulose 5-phosphate: step 3/6. Catalyzes the phosphorylation of the position 2 hydroxy group of 4-diphosphocytidyl-2C-methyl-D-erythritol. This Anaeromyxobacter dehalogenans (strain 2CP-1 / ATCC BAA-258) protein is 4-diphosphocytidyl-2-C-methyl-D-erythritol kinase.